We begin with the raw amino-acid sequence, 321 residues long: Putrescine export system permease protein SapB (321 aa).

At 1-8 the chain is on the cytoplasmic side; sequence MIIFTLRR. The helical transmembrane segment at 9–29 threads the bilayer; it reads ILLLIVTLFLLTFVGFSLSYF. Topologically, residues 30 to 80 are periplasmic; the sequence is TPHAPLQGASLWNAWVFWFNGLIHWDFGVSSINGQPIAEQLKEVFPATMEL. In terms of domain architecture, ABC transmembrane type-1 spans 74-302; it reads FPATMELCIL…SLVIIVNVIS (229 aa). A helical membrane pass occupies residues 81–101; sequence CILAFGFALIVGIPVGMIAGI. The Cytoplasmic segment spans residues 102 to 112; sequence TRHKWQDNLIN. Residues 113–133 traverse the membrane as a helical segment; that stretch reads AIALLGFSIPVFWLALLLTLF. At 134–174 the chain is on the periplasmic side; the sequence is CSLTLGWLPVSGRFDLLYEVKPITGFALIDAWLSDSPWRDE. Residues 175-195 form a helical membrane-spanning segment; the sequence is MIMSAIRHMILPVITLSVAPT. At 196-248 the chain is on the cytoplasmic side; sequence TEVIRLMRISTIEVYDQNYVKAAATRGLSRFTILRRHVLHNALPPVIPRLGLQ. The chain crosses the membrane as a helical span at residues 249-269; it reads FSTMLTLAMITEMVFSWPGLG. Over 270–280 the chain is Periplasmic; the sequence is RWLINAIRQQD. A helical transmembrane segment spans residues 281-301; sequence YAAISAGVMVCGSLVIIVNVI. Over 302–321 the chain is Cytoplasmic; it reads SDILGAMANPLKHKEWYALR.

This sequence belongs to the binding-protein-dependent transport system permease family. OppBC subfamily.

Its subcellular location is the cell inner membrane. Part of a putrescine export transport system, does not play a role in resistance to antimicrobial peptides. In Escherichia coli (strain K12), this protein is Putrescine export system permease protein SapB (sapB).